A 65-amino-acid polypeptide reads, in one-letter code: uncharacterized protein (65 aa).

It to E.coli YjiX.

This is an uncharacterized protein from Escherichia coli O6:H1 (strain CFT073 / ATCC 700928 / UPEC).